A 410-amino-acid polypeptide reads, in one-letter code: LIMR family protein SELMODRAFT_432208 (410 aa).

5 helical membrane-spanning segments follow: residues 30 to 50, 67 to 87, 129 to 149, 156 to 176, and 179 to 199; these read LWWA…IFFY, LWVV…YAVI, VTLM…LTTL, ICLD…NTII, and ILFM…LIFA. Residues 245-274 are a coiled coil; it reads RMFRKNVKKVQQELVFLEDDVEALNEAFPQ. 2 consecutive transmembrane segments (helical) span residues 288–308 and 330–350; these read LVFG…IIVF and GGLL…MSVI. The segment covering 389–400 has biased composition (low complexity); that stretch reads PSSAMDSSSWSA. Positions 389–410 are disordered; the sequence is PSSAMDSSSWSADRPCRPWPWP.

Belongs to the LIMR family.

Its subcellular location is the membrane. The chain is LIMR family protein SELMODRAFT_432208 from Selaginella moellendorffii (Spikemoss).